Here is a 659-residue protein sequence, read N- to C-terminus: Interferon-induced GTP-binding protein Mx2 (659 aa).

The Dynamin-type G domain maps to 65–338; sequence DLALPAIAVI…LISHICKSLP (274 aa). A G1 motif region spans residues 75–82; sequence GDQSSGKS. 75–82 contributes to the GTP binding site; that stretch reads GDQSSGKS. The interval 100–102 is G2 motif; it reads VTR. Residues 176 to 179 are G3 motif; sequence DLPG. GTP contacts are provided by residues 176–180 and 245–248; these read DLPGI and TKPD. The segment at 245–248 is G4 motif; the sequence is TKPD. Positions 277–280 are G5 motif; it reads KCRG. The segment at 547 to 567 is disordered; it reads EAEEEERKHGKSRSSQSKNLQ. Residues 571-659 form the GED domain; sequence MDEIFQHLNA…AQRRLAKFPG (89 aa).

Belongs to the TRAFAC class dynamin-like GTPase superfamily. Dynamin/Fzo/YdjA family.

It is found in the cytoplasm. Functionally, interferon-induced dynamin-like GTPase with antiviral activity against vesicular stomatitis virus (VSV). This Rattus norvegicus (Rat) protein is Interferon-induced GTP-binding protein Mx2 (Mx2).